We begin with the raw amino-acid sequence, 860 residues long: Ras GTPase-activating-like protein gapA (860 aa).

Residues 1-20 show a composition bias toward acidic residues; it reads MEGLEIEDEDVILLDEDDDS. The disordered stretch occupies residues 1 to 48; sequence MEGLEIEDEDVILLDEDDDSSSSSTVNNSSSNIKNNGNTNNNIGNDDS. Residues 21–46 are compositionally biased toward low complexity; sequence SSSSTVNNSSSNIKNNGNTNNNIGND. Positions 146-185 form a coiled coil; it reads AEIQELKRNMVAEIRRNHLLERDVNKLDKRIALLIKHRSN. The Ras-GAP domain maps to 269 to 515; the sequence is FLILSLFRLA…SIVRQYLEDL (247 aa). Residues 663–732 are a coiled coil; that stretch reads NNPQLSSNAE…TIALRDLRKH (70 aa).

As to quaternary structure, heterotetramer. Quaternary complex with activated rac1A, ctxA and ctxB in the absence of rgaA.

Its function is as follows. Part of signaling pathway that is required for completion of cytokinesis. gapA and rgaA control cortexillin localization to the cleavage furrow and hence may be involved in cleavage of the midbody in the final stage of cytokinesis by regulating the actin cytoskeleton. Forms a complex by linking activated rac1A to ctxA in the absence of rgaA. Assembly of this complex is necessary for the recruitment of cortexillin to the midzone of the dividing cell. This chain is Ras GTPase-activating-like protein gapA (gapA), found in Dictyostelium discoideum (Social amoeba).